Consider the following 545-residue polypeptide: CTP synthase (545 aa).

Residues 1–266 (MTTRYIFVTG…DDLVIKRFNL (266 aa)) are amidoligase domain. Ser-14 contacts CTP. Ser-14 serves as a coordination point for UTP. ATP is bound by residues 15–20 (SLGKGI) and Asp-72. Residues Asp-72 and Glu-140 each contribute to the Mg(2+) site. CTP contacts are provided by residues 147–149 (DIE), 187–192 (KTKPTQ), and Lys-223. UTP-binding positions include 187–192 (KTKPTQ) and Lys-223. An ATP-binding site is contributed by 239-241 (KDV). The region spanning 291-542 (TIGMVGKYIE…IAASYAYQKR (252 aa)) is the Glutamine amidotransferase type-1 domain. Gly-352 provides a ligand contact to L-glutamine. Cys-379 functions as the Nucleophile; for glutamine hydrolysis in the catalytic mechanism. L-glutamine is bound by residues 380-383 (LGMQ), Glu-403, and Arg-470. Catalysis depends on residues His-515 and Glu-517.

The protein belongs to the CTP synthase family. As to quaternary structure, homotetramer.

The catalysed reaction is UTP + L-glutamine + ATP + H2O = CTP + L-glutamate + ADP + phosphate + 2 H(+). It catalyses the reaction L-glutamine + H2O = L-glutamate + NH4(+). It carries out the reaction UTP + NH4(+) + ATP = CTP + ADP + phosphate + 2 H(+). Its pathway is pyrimidine metabolism; CTP biosynthesis via de novo pathway; CTP from UDP: step 2/2. Its activity is regulated as follows. Allosterically activated by GTP, when glutamine is the substrate; GTP has no effect on the reaction when ammonia is the substrate. The allosteric effector GTP functions by stabilizing the protein conformation that binds the tetrahedral intermediate(s) formed during glutamine hydrolysis. Inhibited by the product CTP, via allosteric rather than competitive inhibition. Its function is as follows. Catalyzes the ATP-dependent amination of UTP to CTP with either L-glutamine or ammonia as the source of nitrogen. Regulates intracellular CTP levels through interactions with the four ribonucleotide triphosphates. The protein is CTP synthase of Shewanella frigidimarina (strain NCIMB 400).